Consider the following 211-residue polypeptide: LexA repressor (211 aa).

A DNA-binding region (H-T-H motif) is located at residues arginine 31–lysine 51. Residues serine 127 and lysine 164 each act as for autocatalytic cleavage activity in the active site.

Belongs to the peptidase S24 family. Homodimer.

The enzyme catalyses Hydrolysis of Ala-|-Gly bond in repressor LexA.. Represses a number of genes involved in the response to DNA damage (SOS response), including recA and lexA. In the presence of single-stranded DNA, RecA interacts with LexA causing an autocatalytic cleavage which disrupts the DNA-binding part of LexA, leading to derepression of the SOS regulon and eventually DNA repair. The polypeptide is LexA repressor (Pasteurella multocida (strain Pm70)).